Consider the following 443-residue polypeptide: 3-phosphoshikimate 1-carboxyvinyltransferase (443 aa).

3-phosphoshikimate-binding residues include lysine 24, serine 25, and arginine 29. A phosphoenolpyruvate-binding site is contributed by lysine 24. Glycine 95 and arginine 123 together coordinate phosphoenolpyruvate. Serine 167, glutamine 169, aspartate 323, and lysine 350 together coordinate 3-phosphoshikimate. Glutamine 169 contributes to the phosphoenolpyruvate binding site. The active-site Proton acceptor is the aspartate 323. Phosphoenolpyruvate-binding residues include arginine 354 and arginine 398.

Belongs to the EPSP synthase family. As to quaternary structure, monomer.

Its subcellular location is the cytoplasm. The enzyme catalyses 3-phosphoshikimate + phosphoenolpyruvate = 5-O-(1-carboxyvinyl)-3-phosphoshikimate + phosphate. It functions in the pathway metabolic intermediate biosynthesis; chorismate biosynthesis; chorismate from D-erythrose 4-phosphate and phosphoenolpyruvate: step 6/7. Functionally, catalyzes the transfer of the enolpyruvyl moiety of phosphoenolpyruvate (PEP) to the 5-hydroxyl of shikimate-3-phosphate (S3P) to produce enolpyruvyl shikimate-3-phosphate and inorganic phosphate. This chain is 3-phosphoshikimate 1-carboxyvinyltransferase, found in Caulobacter vibrioides (strain ATCC 19089 / CIP 103742 / CB 15) (Caulobacter crescentus).